The sequence spans 232 residues: Thrombin-like enzyme BjussuSP-1 (232 aa).

Positions 1 to 223 constitute a Peptidase S1 domain; that stretch reads VLGGDECDIN…YTDWIQRNIA (223 aa). Cystine bridges form between Cys-7–Cys-138, Cys-25–Cys-41, Cys-73–Cys-230, Cys-117–Cys-184, Cys-149–Cys-163, and Cys-174–Cys-199. The active-site Charge relay system is His-40. The N-linked (GlcNAc...) asparagine glycan is linked to Asn-77. Asp-85 serves as the catalytic Charge relay system. Asn-129 carries an N-linked (GlcNAc...) asparagine glycan. Ser-178 acts as the Charge relay system in catalysis.

It belongs to the peptidase S1 family. Snake venom subfamily. As to quaternary structure, monomer. Post-translationally, N-glycosylated. Contains sialic acid residues. Deglycosylation reduces in 50% the formation of fibrin clot. In terms of tissue distribution, expressed by the venom gland.

The protein resides in the secreted. Inhibited by leupeptin, heparin, and 1.10-phenantroline. Thrombin-like enzyme that shows clotting activity upon human plasma. Shows specific fibrinogenolytic activity for Aalpha chain (FGA). Hydrolyzes fibrin, BAPNA and TAME, as well as chromogenic artificial substrates of the blood coagulation cascasde: S-27654 for factor X (F10), S-2302 for kallikrein (KLK), factor XIa (F11), and XIIa (F12), and S-2266 for kallikrein and factor XIa (F11). Subcutaneous injection into mice induces a mild edema. Intravenous and intramuscular injection reduce plasma fibrinogen concentration and increase the levels of fibrin(ogen) degradation products. Intramuscular injection also promotes an increase in the expression of proMMP-9, but is unable to activate it. The chain is Thrombin-like enzyme BjussuSP-1 from Bothrops jararacussu (Jararacussu).